A 108-amino-acid chain; its full sequence is U-scoloptoxin(16)-Er10a (108 aa).

The N-terminal stretch at 1–24 is a signal peptide; sequence MASFTSFCVLFTFCLLLLAHQARS.

Belongs to the scoloptoxin-16 family. In terms of processing, contains 4 disulfide bonds. In terms of tissue distribution, expressed by the venom gland.

Its subcellular location is the secreted. In Ethmostigmus rubripes (Giant centipede), this protein is U-scoloptoxin(16)-Er10a.